The primary structure comprises 101 residues: ATP-dependent Clp protease adapter protein ClpS 2 (101 aa).

Belongs to the ClpS family. As to quaternary structure, binds to the N-terminal domain of the chaperone ClpA.

Its function is as follows. Involved in the modulation of the specificity of the ClpAP-mediated ATP-dependent protein degradation. This chain is ATP-dependent Clp protease adapter protein ClpS 2, found in Mesorhizobium japonicum (strain LMG 29417 / CECT 9101 / MAFF 303099) (Mesorhizobium loti (strain MAFF 303099)).